A 535-amino-acid chain; its full sequence is Doublesex- and mab-3-related transcription factor A2 (535 aa).

The DM DNA-binding region spans 69–116 (CARCRNHGVVSALKGHKRYCRWKDCLCAKCTLIAERQRVMAAQVALRR). Residues 200 to 315 (LQAGRPGSPQ…GGPGPRQRTP (116 aa)) form a disordered region. Positions 313 to 348 (RTPLDILTRVFPGHRRGVLELVLQGCGGDVVQAIEQ) constitute a DMA domain.

It belongs to the DMRT family.

It is found in the nucleus. In terms of biological role, may be involved in sexual development. The polypeptide is Doublesex- and mab-3-related transcription factor A2 (DMRTA2) (Bos taurus (Bovine)).